A 63-amino-acid polypeptide reads, in one-letter code: Large ribosomal subunit protein bL32 (63 aa).

Residues 1–18 (MAHPKRRISRSRRDKRRA) show a composition bias toward basic residues. Residues 1–27 (MAHPKRRISRSRRDKRRAQYNAKTKAP) are disordered.

It belongs to the bacterial ribosomal protein bL32 family.

This chain is Large ribosomal subunit protein bL32, found in Chloroherpeton thalassium (strain ATCC 35110 / GB-78).